The following is a 235-amino-acid chain: uncharacterized protein (235 aa).

The next 2 membrane-spanning stretches (helical) occupy residues 167–187 and 190–210; these read AFKLAILVTPFVETLSWLNEL and LFAYCPAELSLSLFFLCLLLW.

It is found in the membrane. This is an uncharacterized protein from Saccharomyces cerevisiae (strain ATCC 204508 / S288c) (Baker's yeast).